Reading from the N-terminus, the 431-residue chain is Enolase (431 aa).

Residue Q167 coordinates (2R)-2-phosphoglycerate. The Proton donor role is filled by E209. Residues D246, E287, and D314 each contribute to the Mg(2+) site. Positions 339, 368, 369, and 390 each coordinate (2R)-2-phosphoglycerate. Residue K339 is the Proton acceptor of the active site.

Belongs to the enolase family. The cofactor is Mg(2+).

Its subcellular location is the cytoplasm. It localises to the secreted. The protein resides in the cell surface. The enzyme catalyses (2R)-2-phosphoglycerate = phosphoenolpyruvate + H2O. The protein operates within carbohydrate degradation; glycolysis; pyruvate from D-glyceraldehyde 3-phosphate: step 4/5. In terms of biological role, catalyzes the reversible conversion of 2-phosphoglycerate (2-PG) into phosphoenolpyruvate (PEP). It is essential for the degradation of carbohydrates via glycolysis. The polypeptide is Enolase (Prochlorococcus marinus (strain MIT 9303)).